We begin with the raw amino-acid sequence, 352 residues long: MASREDELRNCVVCGDQATGYHFNALTCEGCKGFFRRTVSKSIGPTCPFAGSCEVSKIQRRHCPACRLQKCLDAGMRKDMILSAEALALRRAKQAQRRAQQTPMQLSNEQEELIQTLLGAHTRHMGTMFEQFVQFRPPAHLFIHHQPLPTLAPVLPLVTHFADVNTFMVQQVIKFTKDLPVFRSLPIEDQISLLKGAAVEICHIVLNTTFCLQTQNFLCGPLRYTIEDAARVSPAVGFQVEFLELLFHFHGTLRKLQLQEPEYVLLAAMALFSPDRPGVTQRHEIDQLQEEMALTLQSYIKGQQQRPRDRFLYAKLLGLLAELRSINEAYGYQIQHIQGLSAMMPLLQEICS.

Residues 8-83 (LRNCVVCGDQ…AGMRKDMILS (76 aa)) constitute a DNA-binding region (nuclear receptor). The NR C4-type zinc finger occupies 11–31 (CVVCGDQATGYHFNALTCEGC). At Thr38 the chain carries Phosphothreonine; by PKC. The segment at 47 to 71 (CPFAGSCEVSKIQRRHCPACRLQKC) adopts an NR C4-type zinc-finger fold. The NR LBD domain occupies 109–352 (EQEELIQTLL…MMPLLQEICS (244 aa)).

This sequence belongs to the nuclear hormone receptor family. NR1 subfamily. Heterodimer of NR1I3 and RXR. Interacts with PSMC4. Interacts with ECT2. Directly interacts with DNAJC7; this complex may also include HSP90. Interacts with CRY1. Interacts with CRY2 in a ligand-dependent manner. Post-translationally, phosphorylated at Thr-38 by PKC, dephosphorylation of Thr-38 is required for nuclear translocation and activation.

The protein resides in the nucleus. The protein localises to the cytoplasm. It is found in the cytoskeleton. In terms of biological role, binds and transactivates the retinoic acid response elements that control expression of the retinoic acid receptor beta 2 and alcohol dehydrogenase 3 genes. Transactivates both the phenobarbital responsive element module of the human CYP2B6 gene and the CYP3A4 xenobiotic response element. The sequence is that of Nuclear receptor subfamily 1 group I member 3 (NR1I3) from Macaca mulatta (Rhesus macaque).